Consider the following 714-residue polypeptide: Testis-expressed protein 13D (714 aa).

Disordered regions lie at residues 300–419 (GSFP…GCSD) and 431–675 (RRCK…PASF). Basic and acidic residues-rich tracts occupy residues 307-320 (SRSHSQGEGSERSQ) and 366-378 (GNRERQNQKEGPK). The segment covering 379–392 (RARRMHTLVFRRSH) has biased composition (basic residues). Positions 403-416 (TVPQGDSRSYSQEG) are enriched in polar residues. Composition is skewed to basic and acidic residues over residues 495 to 505 (CKPEEGPERPQ), 557 to 567 (CKPEEGPERPQ), and 636 to 646 (SRSHGVRESPK). The segment at 677-706 (VPVNWKCPWCKAINFSWRTACYKCKKACVP) adopts a RanBP2-type zinc-finger fold.

This sequence belongs to the TEX13 family.

The chain is Testis-expressed protein 13D from Homo sapiens (Human).